A 179-amino-acid polypeptide reads, in one-letter code: Auxin-responsive protein IAA15 (179 aa).

Residues 21–25 carry the EAR-like (transcriptional repression) motif; it reads LTLAL. The PB1 domain occupies 86-173; sequence RKYVKVALDG…SCKRMRLMKT (88 aa).

The protein belongs to the Aux/IAA family. As to quaternary structure, homodimers and heterodimers.

The protein localises to the nucleus. Its function is as follows. Aux/IAA proteins are short-lived transcriptional factors that function as repressors of early auxin response genes at low auxin concentrations. Repression is thought to result from the interaction with auxin response factors (ARFs), proteins that bind to the auxin-responsive promoter element (AuxRE). Formation of heterodimers with ARF proteins may alter their ability to modulate early auxin response genes expression. This chain is Auxin-responsive protein IAA15 (IAA15), found in Arabidopsis thaliana (Mouse-ear cress).